Consider the following 388-residue polypeptide: Succinate--CoA ligase [ADP-forming] subunit beta (388 aa).

The region spanning 9–244 is the ATP-grasp domain; sequence KSLFAEYGLP…PSQDDAREAH (236 aa). Residues Lys46, 53–55, Glu99, Thr102, and Glu107 each bind ATP; that span reads GRG. 2 residues coordinate Mg(2+): Asn199 and Asp213. Substrate is bound by residues Asn264 and 321 to 323; that span reads GIV.

The protein belongs to the succinate/malate CoA ligase beta subunit family. As to quaternary structure, heterotetramer of two alpha and two beta subunits. Mg(2+) is required as a cofactor.

It catalyses the reaction succinate + ATP + CoA = succinyl-CoA + ADP + phosphate. The catalysed reaction is GTP + succinate + CoA = succinyl-CoA + GDP + phosphate. The protein operates within carbohydrate metabolism; tricarboxylic acid cycle; succinate from succinyl-CoA (ligase route): step 1/1. Functionally, succinyl-CoA synthetase functions in the citric acid cycle (TCA), coupling the hydrolysis of succinyl-CoA to the synthesis of either ATP or GTP and thus represents the only step of substrate-level phosphorylation in the TCA. The beta subunit provides nucleotide specificity of the enzyme and binds the substrate succinate, while the binding sites for coenzyme A and phosphate are found in the alpha subunit. The sequence is that of Succinate--CoA ligase [ADP-forming] subunit beta from Shewanella frigidimarina (strain NCIMB 400).